A 338-amino-acid polypeptide reads, in one-letter code: Malate dehydrogenase, mitochondrial (338 aa).

Residues 1–24 (MLSALARPAGAALRRSFSTSXQNN) constitute a mitochondrion transit peptide. NAD(+) is bound by residues 31–37 (GASGGIG) and aspartate 57. Serine 33 is a glycosylation site (O-linked (GlcNAc) serine). N6-acetyllysine; alternate is present on residues lysine 78 and lysine 91. Lysine 78 and lysine 91 each carry N6-succinyllysine; alternate. 2 residues coordinate substrate: arginine 104 and arginine 110. Residues asparagine 117 and 140–142 (ISN) each bind NAD(+). Asparagine 142 serves as a coordination point for substrate. Lysine 165 bears the N6-acetyllysine mark. Arginine 176 is a binding site for substrate. Position 185 is an N6-acetyllysine; alternate (lysine 185). Position 185 is an N6-succinyllysine; alternate (lysine 185). The active-site Proton acceptor is histidine 200. Position 203 is an N6-succinyllysine (lysine 203). Residues lysine 215 and lysine 239 each carry the N6-acetyllysine; alternate modification. Residues lysine 215 and lysine 239 each carry the N6-succinyllysine; alternate modification. Position 239 is an N6-malonyllysine; alternate (lysine 239). Position 246 is a phosphoserine (serine 246). Methionine 251 provides a ligand contact to NAD(+). At lysine 269 the chain carries N6-succinyllysine. Lysine 296, lysine 301, lysine 307, lysine 314, and lysine 324 each carry N6-acetyllysine; alternate. N6-succinyllysine; alternate occurs at positions 296, 301, 307, 314, and 324. Residue lysine 307 is modified to N6-malonyllysine; alternate. Position 326 is a phosphoserine (serine 326). N6-acetyllysine; alternate is present on residues lysine 328, lysine 329, and lysine 335. Lysine 328 is modified (N6-succinyllysine; alternate). N6-malonyllysine; alternate is present on lysine 329. Lysine 335 carries the N6-succinyllysine; alternate modification.

Belongs to the LDH/MDH superfamily. MDH type 1 family. In terms of assembly, homodimer. Post-translationally, acetylation is enhanced after treatment either with trichostin A (TCA) or with nicotinamide (NAM) with the appearance of tri- and tetraacetylations. Glucose also increases acetylation.

It is found in the mitochondrion matrix. It catalyses the reaction (S)-malate + NAD(+) = oxaloacetate + NADH + H(+). Its activity is regulated as follows. Enzyme activity is enhanced by acetylation. This Sus scrofa (Pig) protein is Malate dehydrogenase, mitochondrial (MDH2).